Consider the following 245-residue polypeptide: Eukaryotic translation initiation factor 3 subunit K (245 aa).

A PCI domain is found at 46-227 (YDCYANLALL…EAKGTVVREN (182 aa)).

The protein belongs to the eIF-3 subunit K family. Component of the eukaryotic translation initiation factor 3 (eIF-3) complex.

The protein resides in the cytoplasm. Its function is as follows. Component of the eukaryotic translation initiation factor 3 (eIF-3) complex, which is involved in protein synthesis of a specialized repertoire of mRNAs and, together with other initiation factors, stimulates binding of mRNA and methionyl-tRNAi to the 40S ribosome. The eIF-3 complex specifically targets and initiates translation of a subset of mRNAs involved in cell proliferation. The polypeptide is Eukaryotic translation initiation factor 3 subunit K (Botryotinia fuckeliana (strain B05.10) (Noble rot fungus)).